An 877-amino-acid chain; its full sequence is Leucine--tRNA ligase (877 aa).

Positions 48–58 (PYPSGKLHMGH) match the 'HIGH' region motif. Positions 636–640 (KMSKS) match the 'KMSKS' region motif. An ATP-binding site is contributed by K639.

This sequence belongs to the class-I aminoacyl-tRNA synthetase family.

Its subcellular location is the cytoplasm. It catalyses the reaction tRNA(Leu) + L-leucine + ATP = L-leucyl-tRNA(Leu) + AMP + diphosphate. This Ralstonia nicotianae (strain ATCC BAA-1114 / GMI1000) (Ralstonia solanacearum) protein is Leucine--tRNA ligase.